The chain runs to 58 residues: Small ribosomal subunit protein bS21 (58 aa).

The interval 39–58 (DKPSVKKRAKSKAAAKYRSR) is disordered. The segment covering 43 to 58 (VKKRAKSKAAAKYRSR) has biased composition (basic residues).

This sequence belongs to the bacterial ribosomal protein bS21 family.

This Chlamydia abortus (strain DSM 27085 / S26/3) (Chlamydophila abortus) protein is Small ribosomal subunit protein bS21.